The following is a 276-amino-acid chain: Ribosomal RNA small subunit methyltransferase A (276 aa).

N27, L29, G54, E75, D101, and N122 together coordinate S-adenosyl-L-methionine.

Belongs to the class I-like SAM-binding methyltransferase superfamily. rRNA adenine N(6)-methyltransferase family. RsmA subfamily.

It localises to the cytoplasm. The catalysed reaction is adenosine(1518)/adenosine(1519) in 16S rRNA + 4 S-adenosyl-L-methionine = N(6)-dimethyladenosine(1518)/N(6)-dimethyladenosine(1519) in 16S rRNA + 4 S-adenosyl-L-homocysteine + 4 H(+). Functionally, specifically dimethylates two adjacent adenosines (A1518 and A1519) in the loop of a conserved hairpin near the 3'-end of 16S rRNA in the 30S particle. May play a critical role in biogenesis of 30S subunits. This chain is Ribosomal RNA small subunit methyltransferase A, found in Brucella abortus biovar 1 (strain 9-941).